A 341-amino-acid chain; its full sequence is Large ribosomal subunit protein uL10 (341 aa).

The interval Glu-301 to Phe-341 is disordered.

It belongs to the universal ribosomal protein uL10 family. Part of the 50S ribosomal subunit. Forms part of the ribosomal stalk which helps the ribosome interact with GTP-bound translation factors. Forms a heptameric L10(L12)2(L12)2(L12)2 complex, where L10 forms an elongated spine to which the L12 dimers bind in a sequential fashion.

Its function is as follows. Forms part of the ribosomal stalk, playing a central role in the interaction of the ribosome with GTP-bound translation factors. In Aeropyrum pernix (strain ATCC 700893 / DSM 11879 / JCM 9820 / NBRC 100138 / K1), this protein is Large ribosomal subunit protein uL10.